The chain runs to 385 residues: S-type anion channel SLAH1 (385 aa).

The Cytoplasmic portion of the chain corresponds to 1–42; it reads MEIPRQEIHIEIDNSIPSSKEFKTGLADAKPVVLMSALRSLH. Residues 43 to 65 traverse the membrane as a helical segment; the sequence is AGYFRISLSLCSQALLWKIMIAP. The Extracellular portion of the chain corresponds to 66–81; it reads ESPSMSHMHSKLPSMA. Residues 82–102 traverse the membrane as a helical segment; that stretch reads FHLLWYLALVTQVSLCFLYAL. At 103–114 the chain is on the cytoplasmic side; that stretch reads KCIFFFDKVKEE. The chain crosses the membrane as a helical span at residues 115–135; that stretch reads FLHYIGVNYLYAPSISWLLML. Over 136 to 150 the chain is Extracellular; sequence QSAPMMEPNSVLYQT. A helical membrane pass occupies residues 151–171; the sequence is LFWIFAVPVLTLDIKLYGQWF. Topologically, residues 172 to 176 are cytoplasmic; the sequence is TTEKR. Residues 177–197 traverse the membrane as a helical segment; the sequence is FLSMLANPASQVSVIANLVAA. The Extracellular portion of the chain corresponds to 198–207; the sequence is RGAAEMGWNE. Residues 208-228 traverse the membrane as a helical segment; the sequence is CALCMFSLGMVHYLVIFVTLY. Residues 229–243 lie on the Cytoplasmic side of the membrane; it reads QRLPGGNNFPAKLRP. Residues 244 to 264 traverse the membrane as a helical segment; it reads IFFLFVAAPAMASLAWNSICG. A topological domain (extracellular) is located at residue T265. A helical membrane pass occupies residues 266–286; the sequence is FDAVAKMLFFLSLFIFMSLVC. Residues 287-299 are Cytoplasmic-facing; that stretch reads RPNLFKKSMKRFN. Residues 300 to 320 form a helical membrane-spanning segment; sequence VAWWAYSFPLTFLALDSVQYA. Residues 321 to 330 are Extracellular-facing; that stretch reads QEVKDPVGSG. A helical membrane pass occupies residues 331–351; that stretch reads LMLIFSSISVLIFLGMMVLTA. Topologically, residues 352–385 are cytoplasmic; the sequence is ANSNRLLRHDPVLGSATDPKDKQKTLSLNATNQN. A disordered region spans residues 366–385; sequence SATDPKDKQKTLSLNATNQN. A compositionally biased stretch (polar residues) spans 376-385; it reads TLSLNATNQN.

Belongs to the SLAC1 S-type anion channel family. Homotrimer. As to expression, expressed in the vascular systems of root.

Its subcellular location is the cell membrane. Slow, weak voltage-dependent S-type anion efflux channel involved in maintenance of anion homeostasis. The chain is S-type anion channel SLAH1 (SLAH1) from Arabidopsis thaliana (Mouse-ear cress).